Consider the following 112-residue polypeptide: uncharacterized protein (112 aa).

This is an uncharacterized protein from Escherichia coli (Bacteriophage T4).